The following is a 218-amino-acid chain: Probable transaldolase (218 aa).

Lysine 87 functions as the Schiff-base intermediate with substrate in the catalytic mechanism.

The protein belongs to the transaldolase family. Type 3B subfamily.

It localises to the cytoplasm. The enzyme catalyses D-sedoheptulose 7-phosphate + D-glyceraldehyde 3-phosphate = D-erythrose 4-phosphate + beta-D-fructose 6-phosphate. Its pathway is carbohydrate degradation; pentose phosphate pathway; D-glyceraldehyde 3-phosphate and beta-D-fructose 6-phosphate from D-ribose 5-phosphate and D-xylulose 5-phosphate (non-oxidative stage): step 2/3. Transaldolase is important for the balance of metabolites in the pentose-phosphate pathway. The chain is Probable transaldolase from Phocaeicola vulgatus (strain ATCC 8482 / DSM 1447 / JCM 5826 / CCUG 4940 / NBRC 14291 / NCTC 11154) (Bacteroides vulgatus).